Reading from the N-terminus, the 646-residue chain is RNA-binding protein RMD9, mitochondrial (646 aa).

Residues 1–14 (MMLRRNAVRSLKTM) constitute a mitochondrion transit peptide. Positions 15–51 (EISVSNVVNSGSIAMLRGKLANVVLSDRTYHSSPIFH) are cleaved as a propeptide — removed in mature form. One copy of the PPR1 repeat lies at 209 to 238 (VSGYGATHLLTSFKELSFDDDCIRIWEASK). Residues 251 to 282 (EPKVVGFMLPLLYAKTRSLTEPNELYNQIIQS) form a PPR2 repeat. Residues 288–317 (PNLYSGLIKVFIKAEDYEKALSLFGQLCEK) form a PPR3 repeat. The stretch at 323–353 (YGYLIETHLSFIGDSKNLTLAESFFDKIIND) is one PPR4 repeat. The stretch at 363–394 (VSTVNSFLQNIWKAQNDFDHVYRIWEKAVKFY) is one PPR5 repeat. Residues 401 to 439 (GILSSLNNTFFTIFFENYINDNINGFRKLQEIITFYSGV) form a PPR6 repeat. A PPR7 repeat occupies 444-473 (EPFFNVMLTRASIWHERSIIDFIDKNYTLY). The PPR8 repeat unit spans residues 481 to 514 (SYRILLKSLGSIDNTNNEEILDRWLELVKKLNEL).

The protein belongs to the RMD9 family. As to quaternary structure, monomer. Phosphorylated. Phosphorylation promotes binding to RNA.

It localises to the mitochondrion inner membrane. Functionally, binds the RNA motif 5'-AAUAA[U/C]AUUCUU-3' in the 3'-UTR of mitochondrial mRNAs. Involved in the processing or stability of mitochondrial mRNAs. The sequence is that of RNA-binding protein RMD9, mitochondrial from Saccharomyces cerevisiae (strain ATCC 204508 / S288c) (Baker's yeast).